A 591-amino-acid polypeptide reads, in one-letter code: Aspartate--tRNA ligase (591 aa).

Glutamate 171 is an L-aspartate binding site. Positions 195–198 (QLFK) are aspartate. Arginine 217 contacts L-aspartate. ATP is bound by residues 217–219 (RDE) and glutamine 226. Histidine 448 lines the L-aspartate pocket. Position 482 (glutamate 482) interacts with ATP. Arginine 489 lines the L-aspartate pocket. Residue 534–537 (GLDR) participates in ATP binding.

It belongs to the class-II aminoacyl-tRNA synthetase family. Type 1 subfamily. Homodimer.

The protein resides in the cytoplasm. It catalyses the reaction tRNA(Asp) + L-aspartate + ATP = L-aspartyl-tRNA(Asp) + AMP + diphosphate. Catalyzes the attachment of L-aspartate to tRNA(Asp) in a two-step reaction: L-aspartate is first activated by ATP to form Asp-AMP and then transferred to the acceptor end of tRNA(Asp). This is Aspartate--tRNA ligase from Aliivibrio salmonicida (strain LFI1238) (Vibrio salmonicida (strain LFI1238)).